The following is a 237-amino-acid chain: Zinc finger AN1 domain-containing stress-associated protein 14 (237 aa).

The disordered stretch occupies residues 1-31 (MATKRKCPANGDDGGVADLEPVAGGSFASPP). The AN1-type zinc-finger motif lies at 171-217 (QPEANRCATCRRKVGLTGFKCRCGGTFCGGHRYADEHGCGFDYKSSG). Zn(2+) is bound by residues Cys-177, Cys-180, Cys-191, Cys-193, Cys-198, His-201, His-207, and Cys-209.

In terms of biological role, may be involved in environmental stress response. This is Zinc finger AN1 domain-containing stress-associated protein 14 (SAP14) from Oryza sativa subsp. japonica (Rice).